Here is a 183-residue protein sequence, read N- to C-terminus: Ribosome-recycling factor (183 aa).

The protein belongs to the RRF family.

Its subcellular location is the cytoplasm. Its function is as follows. Responsible for the release of ribosomes from messenger RNA at the termination of protein biosynthesis. May increase the efficiency of translation by recycling ribosomes from one round of translation to another. This is Ribosome-recycling factor from Mycoplasma genitalium (strain ATCC 33530 / DSM 19775 / NCTC 10195 / G37) (Mycoplasmoides genitalium).